Here is a 122-residue protein sequence, read N- to C-terminus: MIQQETNLEVADNSGARRVMCIKVLGGSKRKYASVGDIIVVSIKEAIPRGKVKKGDVMKAVVVRTAKDIRRADGSVIRFDRNAAVLINNQGEPIGTRIFGPVTRELRAKNHMKIVSLAPEVL.

It belongs to the universal ribosomal protein uL14 family. As to quaternary structure, part of the 50S ribosomal subunit. Forms a cluster with proteins L3 and L19. In the 70S ribosome, L14 and L19 interact and together make contacts with the 16S rRNA in bridges B5 and B8.

Binds to 23S rRNA. Forms part of two intersubunit bridges in the 70S ribosome. The polypeptide is Large ribosomal subunit protein uL14 (Parvibaculum lavamentivorans (strain DS-1 / DSM 13023 / NCIMB 13966)).